We begin with the raw amino-acid sequence, 654 residues long: Beta-galactosidase-1-like protein (654 aa).

The N-terminal stretch at 1–27 (MAPKKPSCLRSLLLPLSLTLLLPQADT) is a signal peptide. N-linked (GlcNAc...) asparagine glycosylation is present at Asn97. Catalysis depends on Glu186, which acts as the Proton donor. Asn243 is a glycosylation site (N-linked (GlcNAc...) asparagine). The active-site Nucleophile is the Glu264.

It belongs to the glycosyl hydrolase 35 family.

Its subcellular location is the secreted. Probable glycosyl hydrolase. The sequence is that of Beta-galactosidase-1-like protein (GLB1L) from Macaca fascicularis (Crab-eating macaque).